A 343-amino-acid chain; its full sequence is Probable siderophore transport system permease protein YfhA (343 aa).

9 helical membrane passes run 15 to 35 (WIVF…SAGL), 69 to 89 (ILTA…LQGL), 97 to 117 (PDII…MMFF), 130 to 150 (WLPA…YLLA), 160 to 180 (LVLI…LLMI), 204 to 224 (QHVK…FVAL), 249 to 269 (FFLL…AGTI), 289 to 309 (GALL…ADIV), and 317 to 337 (VEVP…IYLL).

Belongs to the binding-protein-dependent transport system permease family. FecCD subfamily. In terms of assembly, the complex is composed of one ATP-binding protein (YusV), two transmembrane proteins (YfiZ and YfhA) and a solute-binding protein (YfiY).

Its subcellular location is the cell membrane. Functionally, part of the ABC transporter complex YfiYZ/YfhA/YusV involved in import of the iron-hydroxamate siderophores schizokinen, arthrobactin and corprogen. The chain is Probable siderophore transport system permease protein YfhA (yfhA) from Bacillus subtilis (strain 168).